The chain runs to 589 residues: DNA mismatch repair protein MutL (589 aa).

2 disordered regions span residues 330 to 355 (LQRREAPQRPEPARPYTTPPPSSHRE) and 374 to 394 (RIYEQPEPYRPPEPPAASEPT). Over residues 331-341 (QRREAPQRPEP) the composition is skewed to basic and acidic residues. A compositionally biased stretch (pro residues) spans 381–390 (PYRPPEPPAA).

Belongs to the DNA mismatch repair MutL/HexB family.

Its function is as follows. This protein is involved in the repair of mismatches in DNA. It is required for dam-dependent methyl-directed DNA mismatch repair. May act as a 'molecular matchmaker', a protein that promotes the formation of a stable complex between two or more DNA-binding proteins in an ATP-dependent manner without itself being part of a final effector complex. This Trichlorobacter lovleyi (strain ATCC BAA-1151 / DSM 17278 / SZ) (Geobacter lovleyi) protein is DNA mismatch repair protein MutL.